A 234-amino-acid chain; its full sequence is Proteasome subunit alpha type-6 (234 aa).

At S14 the chain carries Phosphoserine. Residue K191 forms a Glycyl lysine isopeptide (Lys-Gly) (interchain with G-Cter in ubiquitin) linkage.

Belongs to the peptidase T1A family. As to quaternary structure, the 26S proteasome consists of a 20S proteasome core and two 19S regulatory subunits. The 20S proteasome core is composed of 28 subunits that are arranged in four stacked rings, resulting in a barrel-shaped structure. The two end rings are each formed by seven alpha subunits, and the two central rings are each formed by seven beta subunits. The catalytic chamber with the active sites is on the inside of the barrel.

The protein resides in the cytoplasm. It localises to the nucleus. Functionally, the proteasome degrades poly-ubiquitinated proteins in the cytoplasm and in the nucleus. It is essential for the regulated turnover of proteins and for the removal of misfolded proteins. The proteasome is a multicatalytic proteinase complex that is characterized by its ability to cleave peptides with Arg, Phe, Tyr, Leu, and Glu adjacent to the leaving group at neutral or slightly basic pH. It has an ATP-dependent proteolytic activity. This is Proteasome subunit alpha type-6 (PRE5) from Saccharomyces cerevisiae (strain ATCC 204508 / S288c) (Baker's yeast).